The chain runs to 360 residues: Geranylgeranyl pyrophosphate synthase 9, chloroplastic (360 aa).

The transit peptide at 1-39 (MATTVHLSSSSLFSQSRGRRDNSISSVKSLRKRTVLSLS) directs the protein to the chloroplast. Isopentenyl diphosphate is bound by residues K106, R109, and H138. Mg(2+)-binding residues include D145 and D151. R156 lines the dimethylallyl diphosphate pocket. R157 is an isopentenyl diphosphate binding site. 5 residues coordinate dimethylallyl diphosphate: K245, T246, Q283, K300, and K310.

This sequence belongs to the FPP/GGPP synthase family. In terms of assembly, monomer. No interactions with GGR. The cofactor is Mg(2+).

It localises to the plastid. Its subcellular location is the chloroplast. It catalyses the reaction isopentenyl diphosphate + dimethylallyl diphosphate = (2E)-geranyl diphosphate + diphosphate. The catalysed reaction is isopentenyl diphosphate + (2E)-geranyl diphosphate = (2E,6E)-farnesyl diphosphate + diphosphate. It carries out the reaction isopentenyl diphosphate + (2E,6E)-farnesyl diphosphate = (2E,6E,10E)-geranylgeranyl diphosphate + diphosphate. It functions in the pathway isoprenoid biosynthesis; farnesyl diphosphate biosynthesis; farnesyl diphosphate from geranyl diphosphate and isopentenyl diphosphate: step 1/1. The protein operates within isoprenoid biosynthesis; geranyl diphosphate biosynthesis; geranyl diphosphate from dimethylallyl diphosphate and isopentenyl diphosphate: step 1/1. Its pathway is isoprenoid biosynthesis; geranylgeranyl diphosphate biosynthesis; geranylgeranyl diphosphate from farnesyl diphosphate and isopentenyl diphosphate: step 1/1. Functionally, catalyzes the trans-addition of the three molecules of IPP onto DMAPP to form geranylgeranyl pyrophosphate. This is Geranylgeranyl pyrophosphate synthase 9, chloroplastic (GGPPS9) from Arabidopsis thaliana (Mouse-ear cress).